We begin with the raw amino-acid sequence, 187 residues long: Translation machinery-associated protein 22 (187 aa).

The 72-residue stretch at 94–165 folds into the SUI1 domain; the sequence is VTIKRIERNK…EIEEFILEKY (72 aa).

Belongs to the DENR family. Interacts with the 40S ribosomal subunit.

The protein resides in the cytoplasm. This Neurospora crassa (strain ATCC 24698 / 74-OR23-1A / CBS 708.71 / DSM 1257 / FGSC 987) protein is Translation machinery-associated protein 22 (tma-22).